The following is a 124-amino-acid chain: Small ribosomal subunit protein uS12 (124 aa).

The disordered stretch occupies residues 1 to 22 (MATVNQLVRKPRQKPDAKSNVA). Asp-89 carries the 3-methylthioaspartic acid modification.

This sequence belongs to the universal ribosomal protein uS12 family. In terms of assembly, part of the 30S ribosomal subunit. Contacts proteins S8 and S17. May interact with IF1 in the 30S initiation complex.

In terms of biological role, with S4 and S5 plays an important role in translational accuracy. Interacts with and stabilizes bases of the 16S rRNA that are involved in tRNA selection in the A site and with the mRNA backbone. Located at the interface of the 30S and 50S subunits, it traverses the body of the 30S subunit contacting proteins on the other side and probably holding the rRNA structure together. The combined cluster of proteins S8, S12 and S17 appears to hold together the shoulder and platform of the 30S subunit. The chain is Small ribosomal subunit protein uS12 from Pseudoalteromonas atlantica (strain T6c / ATCC BAA-1087).